The sequence spans 251 residues: MSDIGDWFRSIPTITRYWFAATVAVPLVGKLGLISPAYFFLWPEAFLYRFQIWRPITATFYFPVGPGTGFLYLVNLYFLYQYSTRLETGAFDGRPADYLFMLLFNWICIVITGLAMDMQLLMIPLIMSVLYVWAQLNRDMIVSFWFGTRFKACYLPWVILGFNYIIGGSVINELIGNLVGHLYFFLMFRYPMDLGGRNFLSTPQFLYRWLPSRRGGVSGFGVPPASMRRAADQNGGGGRHNWGQGFRLGDQ.

Ser2 carries the post-translational modification N-acetylserine. Over Ser2–Thr15 the chain is Cytoplasmic. Residues Arg16 to Leu31 form a helical membrane-spanning segment. The Lumenal portion of the chain corresponds to Gly32–Gly69. Residues Phe70–Gly89 traverse the membrane as a helical segment. The Cytoplasmic portion of the chain corresponds to Ala90–Arg94. Residues Pro95–Ala115 form a helical membrane-spanning segment. The Lumenal portion of the chain corresponds to Met116–Met122. The chain crosses the membrane as a helical span at residues Ile123 to Asn137. Over Arg138–Tyr154 the chain is Cytoplasmic. The helical transmembrane segment at Leu155–Ile166 threads the bilayer. Residues Gly167–Val170 lie on the Lumenal side of the membrane. A helical transmembrane segment spans residues Ile171 to Arg189. Topologically, residues Tyr190–Gln251 are cytoplasmic. Ser201 carries the phosphoserine modification. Thr202 is modified (phosphothreonine). Ser226 is modified (phosphoserine). The tract at residues Arg229–Gln251 is disordered. The SHP-box signature appears at Asn241–Leu248.

Belongs to the derlin family. In terms of assembly, homotetramer. The four subunits of the tetramer are arranged in a twofold symmetry. Forms homo- and heterooligomers with DERL2 and DERL3; binding to DERL3 is poorer than that between DERL2 and DERL3. Interacts (via SHP-box motif) with VCP. Interacts with AMFR, SELENOS, SEL1L, SELENOK and SYVN1, as well as with SEL1L-SYVN1 and VCP-SELENOS protein complexes; this interaction is weaker than that observed between DERL2 and these complexes. Interacts with NGLY1 and YOD1. Does not bind to EDEM1. Interacts with DNAJB9. Interacts with RNF103. Interacts with HM13. Interacts with XBP1 isoform 1 (via luminal/ectodomain domain); the interaction obviates the need for ectodomain shedding prior HM13/SPP-mediated XBP1 isoform 1 cleavage. Interacts with the signal recognition particle/SRP and the SRP receptor; in the process of endoplasmic reticulum stress-induced pre-emptive quality control. May interact with UBXN6. Interacts with ZFAND2B; probably through VCP. Interacts with CCDC47. Interacts with C18orf32. May interact with TRAM1. Forms a complex with SVIP and VCP/p97.

The protein resides in the endoplasmic reticulum membrane. Functionally, functional component of endoplasmic reticulum-associated degradation (ERAD) for misfolded lumenal proteins. Forms homotetramers which encircle a large channel traversing the endoplasmic reticulum (ER) membrane. This allows the retrotranslocation of misfolded proteins from the ER into the cytosol where they are ubiquitinated and degraded by the proteasome. The channel has a lateral gate within the membrane which provides direct access to membrane proteins with no need to reenter the ER lumen first. May mediate the interaction between VCP and the misfolded protein. Also involved in endoplasmic reticulum stress-induced pre-emptive quality control, a mechanism that selectively attenuates the translocation of newly synthesized proteins into the endoplasmic reticulum and reroutes them to the cytosol for proteasomal degradation. By controlling the steady-state expression of the IGF1R receptor, indirectly regulates the insulin-like growth factor receptor signaling pathway. The chain is Derlin-1 from Bos taurus (Bovine).